Reading from the N-terminus, the 340-residue chain is 4-hydroxy-3-methylbut-2-enyl diphosphate reductase (340 aa).

Residue cysteine 21 coordinates [4Fe-4S] cluster. Histidine 50 and histidine 83 together coordinate (2E)-4-hydroxy-3-methylbut-2-enyl diphosphate. Dimethylallyl diphosphate-binding residues include histidine 50 and histidine 83. The isopentenyl diphosphate site is built by histidine 50 and histidine 83. Cysteine 105 is a [4Fe-4S] cluster binding site. Histidine 133 contacts (2E)-4-hydroxy-3-methylbut-2-enyl diphosphate. Histidine 133 provides a ligand contact to dimethylallyl diphosphate. Histidine 133 contributes to the isopentenyl diphosphate binding site. Glutamate 135 serves as the catalytic Proton donor. Threonine 173 contacts (2E)-4-hydroxy-3-methylbut-2-enyl diphosphate. Cysteine 203 is a [4Fe-4S] cluster binding site. (2E)-4-hydroxy-3-methylbut-2-enyl diphosphate contacts are provided by serine 231, serine 232, asparagine 233, and serine 276. Positions 231, 232, 233, and 276 each coordinate dimethylallyl diphosphate. Residues serine 231, serine 232, asparagine 233, and serine 276 each coordinate isopentenyl diphosphate. The disordered stretch occupies residues lysine 320–arginine 340.

It belongs to the IspH family. The cofactor is [4Fe-4S] cluster.

It catalyses the reaction isopentenyl diphosphate + 2 oxidized [2Fe-2S]-[ferredoxin] + H2O = (2E)-4-hydroxy-3-methylbut-2-enyl diphosphate + 2 reduced [2Fe-2S]-[ferredoxin] + 2 H(+). The enzyme catalyses dimethylallyl diphosphate + 2 oxidized [2Fe-2S]-[ferredoxin] + H2O = (2E)-4-hydroxy-3-methylbut-2-enyl diphosphate + 2 reduced [2Fe-2S]-[ferredoxin] + 2 H(+). Its pathway is isoprenoid biosynthesis; dimethylallyl diphosphate biosynthesis; dimethylallyl diphosphate from (2E)-4-hydroxy-3-methylbutenyl diphosphate: step 1/1. It functions in the pathway isoprenoid biosynthesis; isopentenyl diphosphate biosynthesis via DXP pathway; isopentenyl diphosphate from 1-deoxy-D-xylulose 5-phosphate: step 6/6. Functionally, catalyzes the conversion of 1-hydroxy-2-methyl-2-(E)-butenyl 4-diphosphate (HMBPP) into a mixture of isopentenyl diphosphate (IPP) and dimethylallyl diphosphate (DMAPP). Acts in the terminal step of the DOXP/MEP pathway for isoprenoid precursor biosynthesis. This chain is 4-hydroxy-3-methylbut-2-enyl diphosphate reductase, found in Acidothermus cellulolyticus (strain ATCC 43068 / DSM 8971 / 11B).